The chain runs to 211 residues: Probable nicotinate-nucleotide adenylyltransferase (211 aa).

The protein belongs to the NadD family.

It catalyses the reaction nicotinate beta-D-ribonucleotide + ATP + H(+) = deamido-NAD(+) + diphosphate. It functions in the pathway cofactor biosynthesis; NAD(+) biosynthesis; deamido-NAD(+) from nicotinate D-ribonucleotide: step 1/1. Catalyzes the reversible adenylation of nicotinate mononucleotide (NaMN) to nicotinic acid adenine dinucleotide (NaAD). This Wigglesworthia glossinidia brevipalpis protein is Probable nicotinate-nucleotide adenylyltransferase.